Reading from the N-terminus, the 400-residue chain is WD repeat and FYVE domain-containing protein 2 (400 aa).

6 WD repeats span residues 22 to 61 (GSQEVVNMAVIVPKEEGVISVSEDRTVRVWLKRDSGQYWP), 66 to 105 (AMPSPCSCMSFNPETRRLSIGLDNGTISEFILSEDYNKMT), 112 to 150 (AHQSRVTMVLFVLELEWVLSTGQDKQFAWHCSESGQRLG), 153 to 192 (RTSAVASGLQFDVETRHVFIGDHSGQVTILKLEQENCTLL), 197 to 236 (GHTGGVTALCWDPVQRVLFSGSSDHSVIMWDIGGRKGTAI), and 240 to 279 (GHNDKVQALSYAQHTRQLISCGGDGGIVVWNMDVERQETP). An FYVE-type zinc finger spans residues 281–352 (WLDSDSCQKC…VCDSCHEAIT (72 aa)). Zn(2+) is bound by residues Cys287, Cys290, Cys314, Cys317, Cys322, Cys325, Cys344, and Cys347. The WD 7 repeat unit spans residues 364 to 399 (DSKHNIVHVHFDATRGWLLTSGTDKVIKLWDMTPVV).

As to quaternary structure, homodimer. Interacts (via WD repeats 1-3) with AKT1, AKT2, PRKCZ and PRKCI. Interacts with VAMP2. Forms a complex with VAMP2 and PRKCZ. Interacts with FOXO1. Forms a complex with AKT1 and FOXO1. Highly expressed in the brain (at protein level).

It localises to the endosome. Its subcellular location is the early endosome. The protein localises to the cytoplasm. Functionally, acts in an adapter protein-like fashion to mediate the interaction between the kinase PRKCZ and its substrate VAMP2 and increases the PRKCZ-dependent phosphorylation of VAMP2. Positively regulates adipocyte differentiation, by facilitating the phosphorylation and thus inactivation of the anti-adipogenetic transcription factor FOXO1 by the kinase AKT1. Plays a role in endosomal control of AKT2 signaling; required for insulin-stimulated AKT2 phosphorylation and glucose uptake and insulin-stimulated phosphorylation of AKT2 substrates. Participates in transferrin receptor endocytosis. The protein is WD repeat and FYVE domain-containing protein 2 (Wdfy2) of Mus musculus (Mouse).